The sequence spans 323 residues: MDSKQQTVRLSDGHFIPILGFGTYAPQEVPKSKATEATKIAIDAGFRHIDSASMYQNEKEVGLAIRSKIADGTVKREDIFYTSKVWCTFHRPELVRVCLEQSLKQLQLDYVDLYLIHFPMAMKPGENYLPKDENGKLIYDAVDICDTWEAMEKCKDAGLAKSIGVSNFNRRQLEKILKKPGLKYKPVCNQVECHPYLNQGKLLDFCRSKDIVLVAYSALGSHREKQWVDQSSPVLLDNPVLGSMAKKYNRTPALIALRYQLQRGVVVLAKSFSEKRIKENMQVFEFQLTSEDMKVLDDLNKNIRYISGSSFKDHPDFPFWDEY.

Residues 20 to 24 (GFGTY) and Asp-50 each bind NADP(+). Tyr-55 (proton donor) is an active-site residue. Residue His-117 coordinates substrate. NADP(+) is bound by residues 166–167 (SN), Gln-190, 216–221 (YSALGS), and 270–280 (KSFSEKRIKEN).

The protein belongs to the aldo/keto reductase family. In terms of assembly, monomer. In terms of processing, three forms are detected, probably due to post-translational modifications. In terms of tissue distribution, mainly found in liver. Also expressed weakly in kidney.

Active toward androgens, estrogens, and xenobiotic substrates. Also exhibits low 20 alpha-HSD activity. Shows a-stereospecificity in hydrogen transfer between cofactors and substrates (A-specific). Preferentially catalyzes the reduction of 4-androstenedione, 5-alpha-androstane-3,17-dione, androsterone and dehydroepiandrosterone to testosterone, dihydrotestosterone, 5-alpha-androstane-3-alpha,17-beta-diol and 5-androstene-3-beta,17-beta-diol, respectively. The chain is Estradiol 17 beta-dehydrogenase 5 (Akr1c6) from Mus musculus (Mouse).